The primary structure comprises 515 residues: ATP synthase subunit alpha (515 aa).

171–178 (GDRQTGKT) contacts ATP.

This sequence belongs to the ATPase alpha/beta chains family. As to quaternary structure, F-type ATPases have 2 components, CF(1) - the catalytic core - and CF(0) - the membrane proton channel. CF(1) has five subunits: alpha(3), beta(3), gamma(1), delta(1), epsilon(1). CF(0) has three main subunits: a(1), b(2) and c(9-12). The alpha and beta chains form an alternating ring which encloses part of the gamma chain. CF(1) is attached to CF(0) by a central stalk formed by the gamma and epsilon chains, while a peripheral stalk is formed by the delta and b chains.

Its subcellular location is the cell inner membrane. It carries out the reaction ATP + H2O + 4 H(+)(in) = ADP + phosphate + 5 H(+)(out). Produces ATP from ADP in the presence of a proton gradient across the membrane. The alpha chain is a regulatory subunit. The sequence is that of ATP synthase subunit alpha from Xylella fastidiosa (strain 9a5c).